The following is a 632-amino-acid chain: MAU2 chromatid cohesion factor homolog (632 aa).

TPR repeat units follow at residues 453-486 (GGFYYVQGLHAFHKNSFHEAKRFLRETLKMANAE) and 493-526 (SCSLVLLSHVFLSIGNSKESMNMVTPAMQLASKI).

The protein belongs to the SCC4/mau-2 family. As to quaternary structure, interacts with Nipped-B to form the cohesin loading complex.

It localises to the nucleus. Its subcellular location is the nucleoplasm. In terms of biological role, required for association of the cohesin complex with chromatin during interphase. Plays a role in sister chromatid cohesion and normal progression through prometaphase. The sequence is that of MAU2 chromatid cohesion factor homolog from Drosophila melanogaster (Fruit fly).